The following is a 513-amino-acid chain: GMP synthase [glutamine-hydrolyzing] (513 aa).

One can recognise a Glutamine amidotransferase type-1 domain in the interval M8–E198. Residue C85 is the Nucleophile of the active site. Active-site residues include H172 and E174. The GMPS ATP-PPase domain maps to W199–R388. S226–S232 is a binding site for ATP.

As to quaternary structure, homodimer.

The enzyme catalyses XMP + L-glutamine + ATP + H2O = GMP + L-glutamate + AMP + diphosphate + 2 H(+). Its pathway is purine metabolism; GMP biosynthesis; GMP from XMP (L-Gln route): step 1/1. Functionally, catalyzes the synthesis of GMP from XMP. The polypeptide is GMP synthase [glutamine-hydrolyzing] (Bacillus licheniformis (strain ATCC 14580 / DSM 13 / JCM 2505 / CCUG 7422 / NBRC 12200 / NCIMB 9375 / NCTC 10341 / NRRL NRS-1264 / Gibson 46)).